Consider the following 367-residue polypeptide: Porin Omp2a (367 aa).

The first 22 residues, Met-1–Ala-22, serve as a signal peptide directing secretion.

This sequence belongs to the alphaproteobacteria porin family. Monomer.

The protein localises to the cell outer membrane. In terms of biological role, forms passive diffusion pores that allow small molecular weight hydrophilic materials across the outer membrane. In Brucella melitensis biotype 1 (strain ATCC 23456 / CCUG 17765 / NCTC 10094 / 16M), this protein is Porin Omp2a (omp2a).